The sequence spans 424 residues: Histidine--tRNA ligase (424 aa).

This sequence belongs to the class-II aminoacyl-tRNA synthetase family. Homodimer.

Its subcellular location is the cytoplasm. It catalyses the reaction tRNA(His) + L-histidine + ATP = L-histidyl-tRNA(His) + AMP + diphosphate + H(+). In Shewanella piezotolerans (strain WP3 / JCM 13877), this protein is Histidine--tRNA ligase.